Here is a 396-residue protein sequence, read N- to C-terminus: Elongation factor Tu (396 aa).

One can recognise a tr-type G domain in the interval 10–206 (KPHVNVGTIG…TLDEYIPEPE (197 aa)). Positions 19–26 (GHVDHGKT) are G1. 19 to 26 (GHVDHGKT) is a binding site for GTP. Position 26 (T26) interacts with Mg(2+). The tract at residues 60 to 64 (GITIA) is G2. The segment at 81 to 84 (DCPG) is G3. Residues 81 to 85 (DCPGH) and 136 to 139 (NKAD) each bind GTP. A G4 region spans residues 136–139 (NKAD). Positions 174-176 (SAL) are G5.

This sequence belongs to the TRAFAC class translation factor GTPase superfamily. Classic translation factor GTPase family. EF-Tu/EF-1A subfamily. As to quaternary structure, monomer.

The protein resides in the cytoplasm. It catalyses the reaction GTP + H2O = GDP + phosphate + H(+). Its function is as follows. GTP hydrolase that promotes the GTP-dependent binding of aminoacyl-tRNA to the A-site of ribosomes during protein biosynthesis. The protein is Elongation factor Tu of Alcanivorax borkumensis (strain ATCC 700651 / DSM 11573 / NCIMB 13689 / SK2).